A 103-amino-acid chain; its full sequence is N(4)-acetylcytidine amidohydrolase (103 aa).

Residues 6 to 94 (ITFFQRFQND…IAEIYPNQTQ (89 aa)) enclose the ASCH domain. Lys21 (proton acceptor) is an active-site residue. Thr24 acts as the Nucleophile in catalysis. Glu74 (proton donor) is an active-site residue.

This sequence belongs to the N(4)-acetylcytidine amidohydrolase family.

The catalysed reaction is N(4)-acetylcytidine + H2O = cytidine + acetate + H(+). The enzyme catalyses N(4)-acetyl-2'-deoxycytidine + H2O = 2'-deoxycytidine + acetate + H(+). It carries out the reaction N(4)-acetylcytosine + H2O = cytosine + acetate + H(+). Functionally, catalyzes the hydrolysis of N(4)-acetylcytidine (ac4C). This Salmonella typhi protein is N(4)-acetylcytidine amidohydrolase (yqfB).